The following is a 156-amino-acid chain: Ribosomal RNA large subunit methyltransferase H (156 aa).

S-adenosyl-L-methionine is bound by residues L73, G104, and 123–128 (LSALTL).

The protein belongs to the RNA methyltransferase RlmH family. In terms of assembly, homodimer.

It localises to the cytoplasm. The catalysed reaction is pseudouridine(1915) in 23S rRNA + S-adenosyl-L-methionine = N(3)-methylpseudouridine(1915) in 23S rRNA + S-adenosyl-L-homocysteine + H(+). Specifically methylates the pseudouridine at position 1915 (m3Psi1915) in 23S rRNA. This chain is Ribosomal RNA large subunit methyltransferase H, found in Shewanella woodyi (strain ATCC 51908 / MS32).